The following is a 157-amino-acid chain: Protein Smg (157 aa).

The protein belongs to the Smg family.

The sequence is that of Protein Smg from Shigella boydii serotype 18 (strain CDC 3083-94 / BS512).